A 202-amino-acid chain; its full sequence is Glycerol-3-phosphate acyltransferase (202 aa).

4 consecutive transmembrane segments (helical) span residues 11 to 31 (ALIAALVLGYACGAIPFGLIL), 87 to 107 (PALAAGLGAFLGHLFPVWLGF), 116 to 136 (FIGVLLALSPLTLAAFAAIWL), and 158 to 178 (VILWALGHGGVAALFLVLAAL).

The protein belongs to the PlsY family. Probably interacts with PlsX.

It is found in the cell inner membrane. It carries out the reaction an acyl phosphate + sn-glycerol 3-phosphate = a 1-acyl-sn-glycero-3-phosphate + phosphate. Its pathway is lipid metabolism; phospholipid metabolism. Its function is as follows. Catalyzes the transfer of an acyl group from acyl-phosphate (acyl-PO(4)) to glycerol-3-phosphate (G3P) to form lysophosphatidic acid (LPA). This enzyme utilizes acyl-phosphate as fatty acyl donor, but not acyl-CoA or acyl-ACP. This is Glycerol-3-phosphate acyltransferase from Methylorubrum populi (strain ATCC BAA-705 / NCIMB 13946 / BJ001) (Methylobacterium populi).